Reading from the N-terminus, the 996-residue chain is Sodium/potassium-transporting ATPase subunit alpha-A (996 aa).

The next 2 membrane-spanning stretches (helical) occupy residues 73-93 and 107-123; these read LFGGFQMLLWIGSILCFIAYT and LYLGLALLFVVIMTGCF. A disordered region spans residues 191–211; that stretch reads DNSSLTGESEPQSRSTECTND. 2 helical membrane-spanning segments follow: residues 268 to 290 and 297 to 325; these read FIHIITAMAVSLAAVFAVISFLY and AAIFMIGIIVAKVPEGLLATVTVCLTLTA. The active-site 4-aspartylphosphate intermediate is the aspartate 353. Lysine 483 is a binding site for ATP. Aspartate 692 and aspartate 696 together coordinate Mg(2+). 4 helical membrane passes run 762 to 785, 820 to 847, 889 to 909, and 926 to 951; these read LSPFLMYILFDLPLAIGTVTILCI, ERLISMAYGQIGVMQAFGGFFTYFVIMG, YTCHTAFFISIVIVQWTDLII, and TLNFALVFETCVAAFLSYTPGMDKGL.

Belongs to the cation transport ATPase (P-type) (TC 3.A.3) family. Type IIC subfamily. The sodium/potassium-transporting ATPase is composed of a catalytic alpha subunit, an auxiliary non-catalytic beta subunit and an additional regulatory subunit.

Its subcellular location is the cell membrane. It catalyses the reaction K(+)(out) + Na(+)(in) + ATP + H2O = K(+)(in) + Na(+)(out) + ADP + phosphate + H(+). This is the catalytic component of the active enzyme, which catalyzes the hydrolysis of ATP coupled with the exchange of sodium and potassium ions across the plasma membrane. This action creates the electrochemical gradient of sodium and potassium ions, providing the energy for active transport of various nutrients. The sequence is that of Sodium/potassium-transporting ATPase subunit alpha-A from Artemia franciscana (Brine shrimp).